A 314-amino-acid polypeptide reads, in one-letter code: MIKVVFMGTPDFTVPVLRRLIEDGYEVVGVVTQPDRPVGRKKVLTPTPVKVEAEKHGIPVLQPLKIREKDEYEKVLALEPDLIVTAAFGQIVPNEILEAPKYGCINVHASLLPELRGGAPIHYAIMEGKEKTGITIMYMVEKLDAGDILTQVEVEIEERETTGSLFDKLSEAGAHLLSKTVPLLIQGKLEPIKQNEEEVTFAYNIKREQEKIDWTKTGEEVYNHIRGLNPWPVAYTTLAGQVVKVWWGEKVPITEPAEAGTIVAIEEDGFVVATSNETGVKITELQPSGKKRMSCSQFLRGTKPEIGTKLGENA.

110-113 lines the (6S)-5,6,7,8-tetrahydrofolate pocket; sequence SLLP.

It belongs to the Fmt family.

The catalysed reaction is L-methionyl-tRNA(fMet) + (6R)-10-formyltetrahydrofolate = N-formyl-L-methionyl-tRNA(fMet) + (6S)-5,6,7,8-tetrahydrofolate + H(+). Its function is as follows. Attaches a formyl group to the free amino group of methionyl-tRNA(fMet). The formyl group appears to play a dual role in the initiator identity of N-formylmethionyl-tRNA by promoting its recognition by IF2 and preventing the misappropriation of this tRNA by the elongation apparatus. The protein is Methionyl-tRNA formyltransferase of Bacillus cereus (strain ATCC 14579 / DSM 31 / CCUG 7414 / JCM 2152 / NBRC 15305 / NCIMB 9373 / NCTC 2599 / NRRL B-3711).